The chain runs to 475 residues: Ribulose bisphosphate carboxylase large chain (475 aa).

Residues 1–2 (MS) constitute a propeptide that is removed on maturation. An N-acetylproline modification is found at P3. K14 bears the N6,N6,N6-trimethyllysine mark. 2 residues coordinate substrate: N123 and T173. The active-site Proton acceptor is the K175. Residue K177 participates in substrate binding. The Mg(2+) site is built by K201, D203, and E204. An N6-carboxylysine modification is found at K201. H294 serves as the catalytic Proton acceptor. Substrate-binding residues include R295, H327, and S379.

The protein belongs to the RuBisCO large chain family. Type I subfamily. Heterohexadecamer of 8 large chains and 8 small chains; disulfide-linked. The disulfide link is formed within the large subunit homodimers. It depends on Mg(2+) as a cofactor. In terms of processing, the disulfide bond which can form in the large chain dimeric partners within the hexadecamer appears to be associated with oxidative stress and protein turnover.

It localises to the plastid. It is found in the chloroplast. The catalysed reaction is 2 (2R)-3-phosphoglycerate + 2 H(+) = D-ribulose 1,5-bisphosphate + CO2 + H2O. The enzyme catalyses D-ribulose 1,5-bisphosphate + O2 = 2-phosphoglycolate + (2R)-3-phosphoglycerate + 2 H(+). Functionally, ruBisCO catalyzes two reactions: the carboxylation of D-ribulose 1,5-bisphosphate, the primary event in carbon dioxide fixation, as well as the oxidative fragmentation of the pentose substrate in the photorespiration process. Both reactions occur simultaneously and in competition at the same active site. This Equisetum arvense (Field horsetail) protein is Ribulose bisphosphate carboxylase large chain.